Reading from the N-terminus, the 837-residue chain is Striatin-interacting protein 1 (837 aa).

N-acetylmethionine is present on Met1. 2 disordered regions span residues 1-67 (MEPA…ESPD) and 333-423 (AASP…KGLP). The span at 18 to 35 (PQPPPPPPPATAQPPPGA) shows a compositional bias: pro residues. The span at 47–60 (KAREFNRNQRKDSE) shows a compositional bias: basic and acidic residues. Phosphoserine is present on residues Ser59, Ser335, and Ser339. The segment covering 356–377 (KALIKQDNLDAFNERDPYKADD) has biased composition (basic and acidic residues). The segment covering 378–391 (SREEEEENDDDSSL) has biased composition (acidic residues). Ser788 is subject to Phosphoserine. Positions 796–837 (DNCLQSVLGQRVDLPEDFQMNYDLWLEREVFSKPISWEELLQ) are required for STRIPAK core complex formation.

It belongs to the STRIP family. As to quaternary structure, part of the core of STRIPAK complexes composed of PP2A catalytic and scaffolding subunits, the striatins (PP2A regulatory subunits), the striatin-associated proteins MOB4, STRIP1 and STRIP2, PDCD10 and members of the STE20 kinases, such as STK24 and STK26. The STRIPAK complex can be extended by adapter proteins such as SLMAP:SIKE1, CTTNBP2 or CTTNBP2NL. Interacts with CDC42BPB. Interacts with CTTNBP2NL.

It localises to the cytoplasm. Its function is as follows. Plays a role in the regulation of cell morphology and cytoskeletal organization. Required in the cortical actin filament dynamics and cell shape. Part of the striatin-interacting phosphatase and kinase (STRIPAK) complexes. STRIPAK complexes have critical roles in protein (de)phosphorylation and are regulators of multiple signaling pathways including Hippo, MAPK, nuclear receptor and cytoskeleton remodeling. Different types of STRIPAK complexes are involved in a variety of biological processes such as cell growth, differentiation, apoptosis, metabolism and immune regulation. The sequence is that of Striatin-interacting protein 1 (Strip1) from Mus musculus (Mouse).